The sequence spans 349 residues: MSVPHIQHRLDPDDPNTSIKAVIKEIKPELDPENLEFFEFTEGISNKLVGCRPTGGSDQEILLFRIYGNKTELFIDRKKEIATYSILNPLGYAPPVYATFENGFCYGFMVGSVMCPKTVCDPHISSLIAKHVADLHAIKLQEENPQPSWYKAILHFFSIIPDKFPDAAKENRFKEVLASKAYLLEEVKLLKSKLDKLESAIVFAHNDLLCKNIIYNKDKDSVCTIDFEYANPNPIAYDIANHFCEYAGVDEVDYSLYPQKDHQVKFLESYLKRAMELQGEKDVNPSSREIEKLYVHVNQFALAAHFFWGVWGLVQAHYSEIDFDFLEYAITRLNEYYLRKEKFLSLTCE.

It belongs to the choline/ethanolamine kinase family.

The protein resides in the cytoplasm. The enzyme catalyses ethanolamine + ATP = phosphoethanolamine + ADP + H(+). It functions in the pathway phospholipid metabolism; phosphatidylethanolamine biosynthesis; phosphatidylethanolamine from ethanolamine: step 1/3. Highly specific for ethanolamine phosphorylation. May be a rate-controlling step in phosphatidylethanolamine biosynthesis. This Nematostella vectensis (Starlet sea anemone) protein is Probable ethanolamine kinase (etnk).